The primary structure comprises 240 residues: Rho GDP-dissociation inhibitor 1 (240 aa).

The disordered stretch occupies residues 1-66 (MSLVSGARDM…DDDSKLQLGP (66 aa)).

Belongs to the Rho GDI family. In terms of assembly, interacts with RAC-like GTP binding proteins ARAC5/ROP4 and ARAC3/ROP6.

Its subcellular location is the cytoplasm. Regulates the GDP/GTP exchange reaction of the Rho proteins by inhibiting the dissociation of GDP from them, and the subsequent binding of GTP to them. This is Rho GDP-dissociation inhibitor 1 (GDI1) from Arabidopsis thaliana (Mouse-ear cress).